A 134-amino-acid polypeptide reads, in one-letter code: Peroxisomal testis-specific protein 1 (134 aa).

The Microbody targeting signal signature appears at 131–134 (NHLL).

It is found in the peroxisome. The sequence is that of Peroxisomal testis-specific protein 1 (PXT1) from Homo sapiens (Human).